The sequence spans 359 residues: Olfactory receptor 8S1 (359 aa).

Over 1–25 (MALGNHSTITEFLLLGLSADPNIRA) the chain is Extracellular. Asn-5 carries an N-linked (GlcNAc...) asparagine glycan. A helical transmembrane segment spans residues 26–46 (LLFVLFLGIYLLTIMENLMLL). Residues 47-54 (LMIRADSC) are Cytoplasmic-facing. The chain crosses the membrane as a helical span at residues 55–75 (LHKPMYFFLSHLSFVDLCFSS). Over 76–99 (VIVPKMLENLLSQRKTISVEGCLA) the chain is Extracellular. Cys-97 and Cys-189 form a disulfide bridge. A helical transmembrane segment spans residues 100–120 (QVFFVFVTAGTEACLLSGMAY). Residues 121 to 139 (DRHAAICRPLLYGQIMGKQ) lie on the Cytoplasmic side of the membrane. Residues 140 to 160 (LYMHLVWGSWGLGFLDALINV) traverse the membrane as a helical segment. Topologically, residues 161-197 (LLAVNMVFCEAKIIHHYSYEMPSLLPLSCSDISRSLI) are extracellular. A helical membrane pass occupies residues 198-217 (ALLCSTLLHGLGNFLLVFLS). Over 218 to 237 (YTRIISTILSISSTSGRSKA) the chain is Cytoplasmic. A helical transmembrane segment spans residues 238–258 (FSTCSAHLTAVTLYYGSGLLR). The Extracellular portion of the chain corresponds to 259–269 (HLMPNSGSPIE). Residues 270-290 (LIFSVQYTVVTPMLNSLIYSL) form a helical membrane-spanning segment. Over 291 to 359 (KNKEVKGERS…ALRAAPTALP (69 aa)) the chain is Cytoplasmic. Residues 301 to 338 (LRDSSHLPQLHKGQARWKRPAFTEGRREPGHPELSIPV) form a disordered region.

This sequence belongs to the G-protein coupled receptor 1 family.

It localises to the cell membrane. Functionally, odorant receptor. The sequence is that of Olfactory receptor 8S1 (OR8S1) from Homo sapiens (Human).